The sequence spans 135 residues: Integration host factor subunit beta (135 aa).

Residues 83–92 (GKELRERVDR) are compositionally biased toward basic and acidic residues. The tract at residues 83-135 (GKELRERVDRTVTQGGGMNGNGHAPHGKTGQSQLGSQSPASLHDDGQLNLVRS) is disordered. Positions 111-122 (TGQSQLGSQSPA) are enriched in polar residues.

The protein belongs to the bacterial histone-like protein family. In terms of assembly, heterodimer of an alpha and a beta chain.

This protein is one of the two subunits of integration host factor, a specific DNA-binding protein that functions in genetic recombination as well as in transcriptional and translational control. The chain is Integration host factor subunit beta from Cupriavidus metallidurans (strain ATCC 43123 / DSM 2839 / NBRC 102507 / CH34) (Ralstonia metallidurans).